The chain runs to 159 residues: Ribosomal RNA large subunit methyltransferase H (159 aa).

S-adenosyl-L-methionine contacts are provided by residues G108 and 127–132 (FGPMTF).

It belongs to the RNA methyltransferase RlmH family. Homodimer.

It localises to the cytoplasm. It carries out the reaction pseudouridine(1915) in 23S rRNA + S-adenosyl-L-methionine = N(3)-methylpseudouridine(1915) in 23S rRNA + S-adenosyl-L-homocysteine + H(+). Specifically methylates the pseudouridine at position 1915 (m3Psi1915) in 23S rRNA. This is Ribosomal RNA large subunit methyltransferase H from Magnetococcus marinus (strain ATCC BAA-1437 / JCM 17883 / MC-1).